The chain runs to 524 residues: Na(+)/H(+) antiporter NhaB (524 aa).

9 helical membrane-spanning segments follow: residues 13–33 (FLGN…IINP), 98–118 (LLLV…LFVF), 140–160 (AFLS…SVSV), 239–259 (FFIR…LVCL), 304–324 (AIIG…VGLV), 325–345 (GLSV…HSLG), 358–378 (LTVF…TPII), 448–468 (ATPN…APLI), and 479–499 (ALPY…FLLV).

It belongs to the NhaB Na(+)/H(+) (TC 2.A.34) antiporter family.

The protein localises to the cell inner membrane. The catalysed reaction is 2 Na(+)(in) + 3 H(+)(out) = 2 Na(+)(out) + 3 H(+)(in). Na(+)/H(+) antiporter that extrudes sodium in exchange for external protons. This is Na(+)/H(+) antiporter NhaB from Yersinia pseudotuberculosis serotype I (strain IP32953).